The sequence spans 500 residues: Probable malate:quinone oxidoreductase (500 aa).

It belongs to the MQO family. FAD is required as a cofactor.

The enzyme catalyses (S)-malate + a quinone = a quinol + oxaloacetate. The protein operates within carbohydrate metabolism; tricarboxylic acid cycle; oxaloacetate from (S)-malate (quinone route): step 1/1. The protein is Probable malate:quinone oxidoreductase of Bordetella avium (strain 197N).